Here is a 280-residue protein sequence, read N- to C-terminus: MARARASGGLTIVNAIGHGRLGGAAGLGLWVESRVREARGLWAGVSLTPRGERRLPPRVLEAAATAACSLGACVEGLEAEVHTGFPPGVGLKGSAALLASLVEAVLRLKGVRAPPWRAALAAARVSRGAGLSVTGALDDHAASLLEAPVITDNRGMAILRLLPRDGCRLTAVIGVPGVENPVENLDPSPFRRHSRLYDAAARLGLAGEWLPAMAVSGVAGALALGVEGLASRLYEAGAAAAGVTGKGPAVFALTERPRGAAEVLETAGYEVVEARFKWCG.

86–96 (PPGVGLKGSAA) lines the ATP pocket.

This sequence belongs to the GHMP kinase family. Archaeal shikimate kinase subfamily.

Its subcellular location is the cytoplasm. The enzyme catalyses shikimate + ATP = 3-phosphoshikimate + ADP + H(+). Its pathway is metabolic intermediate biosynthesis; chorismate biosynthesis; chorismate from D-erythrose 4-phosphate and phosphoenolpyruvate: step 5/7. This is Shikimate kinase (aroK) from Aeropyrum pernix (strain ATCC 700893 / DSM 11879 / JCM 9820 / NBRC 100138 / K1).